Reading from the N-terminus, the 348-residue chain is Neuronal growth regulator 1 (348 aa).

Residues 1–31 form the signal peptide; the sequence is MVLLAQGACCSNQWLAAVLLSLCSCLPAGQS. Ig-like C2-type domains follow at residues 32 to 128, 133 to 215, and 219 to 307; these read VDFP…VHLT, PKIY…RVVV, and PTIQ…LPLN. Cysteine 54 and cysteine 112 form a disulfide bridge. Asparagine 67 and asparagine 149 each carry an N-linked (GlcNAc...) asparagine glycan. Disulfide bonds link cysteine 154-cysteine 197 and cysteine 239-cysteine 291. Tyrosine 181 carries the post-translational modification Phosphotyrosine. Asparagine 269, asparagine 280, asparagine 288, and asparagine 301 each carry an N-linked (GlcNAc...) asparagine glycan. A lipid anchor (GPI-anchor amidated glycine) is attached at glycine 318. A propeptide spans 319–348 (removed in mature form); the sequence is SACDLFSCWSLALTLSSVISIFYLKNAILQ.

It belongs to the immunoglobulin superfamily. IgLON family. In terms of processing, glycosylated. In terms of tissue distribution, highly expressed in brain.

It is found in the cell membrane. Its function is as follows. May be involved in cell-adhesion. May function as a trans-neural growth-promoting factor in regenerative axon sprouting in the mammalian brain. This chain is Neuronal growth regulator 1 (Negr1), found in Rattus norvegicus (Rat).